The following is a 104-amino-acid chain: Cysteine-rich and transmembrane domain-containing protein 1 (104 aa).

Composition is skewed to pro residues over residues 1–25 (MNPE…PQQP) and 33–47 (GAPP…PPQG). Residues 1 to 47 (MNPENPPPYPGPGPTAPYPPYPQQPMGPMGPMGAPPPQGYPYPPPQG) are disordered. A helical membrane pass occupies residues 81–98 (LGPSTCLTACWTALCCCC).

The protein belongs to the CYSTM1 family.

It is found in the membrane. This chain is Cysteine-rich and transmembrane domain-containing protein 1 (Cystm1), found in Mus musculus (Mouse).